Consider the following 288-residue polypeptide: 33 kDa chaperonin (288 aa).

Cystine bridges form between Cys237–Cys239 and Cys270–Cys273.

Belongs to the HSP33 family. Under oxidizing conditions two disulfide bonds are formed involving the reactive cysteines. Under reducing conditions zinc is bound to the reactive cysteines and the protein is inactive.

It is found in the cytoplasm. In terms of biological role, redox regulated molecular chaperone. Protects both thermally unfolding and oxidatively damaged proteins from irreversible aggregation. Plays an important role in the bacterial defense system toward oxidative stress. The sequence is that of 33 kDa chaperonin from Agathobacter rectalis (strain ATCC 33656 / DSM 3377 / JCM 17463 / KCTC 5835 / VPI 0990) (Eubacterium rectale).